The primary structure comprises 464 residues: Cysteine--tRNA ligase (464 aa).

Cys32 serves as a coordination point for Zn(2+). The short motif at 34–44 is the 'HIGH' region element; it reads VTVYDDCHIGH. 3 residues coordinate Zn(2+): Cys213, His238, and Glu242. The short motif at 270-274 is the 'KMSKS' region element; it reads KMSKS. Lys273 serves as a coordination point for ATP.

Belongs to the class-I aminoacyl-tRNA synthetase family. Monomer. The cofactor is Zn(2+).

It localises to the cytoplasm. The enzyme catalyses tRNA(Cys) + L-cysteine + ATP = L-cysteinyl-tRNA(Cys) + AMP + diphosphate. In Francisella tularensis subsp. holarctica (strain LVS), this protein is Cysteine--tRNA ligase.